The chain runs to 398 residues: Cyclin-dependent kinase D-1 (398 aa).

Residues 11–291 (YLKREVLGQG…IQQALKHRYF (281 aa)) form the Protein kinase domain. ATP contacts are provided by residues 17 to 25 (LGQGTYGVV) and K40. Residue Y22 is modified to Phosphotyrosine. Residue D133 is the Proton acceptor of the active site. S160 is modified (phosphoserine). T166 carries the phosphothreonine modification. The segment at 296 to 318 (SPTDPLKLPRPVSKQDAKSSDSK) is disordered. A compositionally biased stretch (basic and acidic residues) spans 308-318 (SKQDAKSSDSK).

Belongs to the protein kinase superfamily. CMGC Ser/Thr protein kinase family. CDC2/CDKX subfamily. Autophosphorylated. As to expression, expressed at low levels in suspension cell culture, but not in plant organs.

The protein localises to the nucleus. It carries out the reaction L-seryl-[protein] + ATP = O-phospho-L-seryl-[protein] + ADP + H(+). The enzyme catalyses L-threonyl-[protein] + ATP = O-phospho-L-threonyl-[protein] + ADP + H(+). It catalyses the reaction [DNA-directed RNA polymerase] + ATP = phospho-[DNA-directed RNA polymerase] + ADP + H(+). The chain is Cyclin-dependent kinase D-1 (CDKD-1) from Arabidopsis thaliana (Mouse-ear cress).